We begin with the raw amino-acid sequence, 303 residues long: Probable 5-dehydro-4-deoxyglucarate dehydratase (303 aa).

The protein belongs to the DapA family.

The enzyme catalyses 5-dehydro-4-deoxy-D-glucarate + H(+) = 2,5-dioxopentanoate + CO2 + H2O. The protein operates within carbohydrate acid metabolism; D-glucarate degradation; 2,5-dioxopentanoate from D-glucarate: step 2/2. The sequence is that of Probable 5-dehydro-4-deoxyglucarate dehydratase from Agrobacterium fabrum (strain C58 / ATCC 33970) (Agrobacterium tumefaciens (strain C58)).